Reading from the N-terminus, the 359-residue chain is Mannose-1-phosphate guanylyltransferase (359 aa).

It belongs to the transferase hexapeptide repeat family.

The enzyme catalyses alpha-D-mannose 1-phosphate + GTP + H(+) = GDP-alpha-D-mannose + diphosphate. The protein operates within cell wall biogenesis. Its pathway is nucleotide-sugar biosynthesis; GDP-alpha-D-mannose biosynthesis; GDP-alpha-D-mannose from alpha-D-mannose 1-phosphate (GTP route): step 1/1. In terms of biological role, catalyzes the formation of GDP-mannose from D-mannose-1-phosphate and GTP. Plays an important role in the synthesis of different glycoconjugates which are responsible for cell wall structure, virulence and immunomodulatory activity of M.tuberculosis. The chain is Mannose-1-phosphate guanylyltransferase from Mycobacterium tuberculosis (strain ATCC 25618 / H37Rv).